The sequence spans 213 residues: Pyrrolidone-carboxylate peptidase (213 aa).

Active-site residues include Glu78, Cys141, and His165.

Belongs to the peptidase C15 family. Homotetramer.

The protein localises to the cytoplasm. It catalyses the reaction Release of an N-terminal pyroglutamyl group from a polypeptide, the second amino acid generally not being Pro.. Removes 5-oxoproline from various penultimate amino acid residues except L-proline. The polypeptide is Pyrrolidone-carboxylate peptidase (Clostridium perfringens (strain 13 / Type A)).